The primary structure comprises 173 residues: Peptide methionine sulfoxide reductase MsrA (173 aa).

Cysteine 10 is a catalytic residue.

The protein belongs to the MsrA Met sulfoxide reductase family.

The enzyme catalyses L-methionyl-[protein] + [thioredoxin]-disulfide + H2O = L-methionyl-(S)-S-oxide-[protein] + [thioredoxin]-dithiol. The catalysed reaction is [thioredoxin]-disulfide + L-methionine + H2O = L-methionine (S)-S-oxide + [thioredoxin]-dithiol. Functionally, has an important function as a repair enzyme for proteins that have been inactivated by oxidation. Catalyzes the reversible oxidation-reduction of methionine sulfoxide in proteins to methionine. The sequence is that of Peptide methionine sulfoxide reductase MsrA from Acinetobacter baumannii (strain AB307-0294).